The sequence spans 238 residues: Glyceraldehyde 3-phosphate phosphatase (238 aa).

The protein belongs to the HAD-like hydrolase superfamily. Mg(2+) is required as a cofactor.

Its function is as follows. Catalyzes the dephosphorylation of D,L-glyceraldehyde 3-phosphate in vitro. In Pyrococcus abyssi (strain GE5 / Orsay), this protein is Glyceraldehyde 3-phosphate phosphatase.